A 233-amino-acid chain; its full sequence is 5'-methylthioadenosine/S-adenosylhomocysteine nucleosidase (233 aa).

Glu-12 (proton acceptor) is an active-site residue. Residues Gly-78, Ile-152, and 173-174 (ME) contribute to the substrate site. The active-site Proton donor is Asp-197.

This sequence belongs to the PNP/UDP phosphorylase family. MtnN subfamily. As to quaternary structure, homodimer.

It carries out the reaction S-adenosyl-L-homocysteine + H2O = S-(5-deoxy-D-ribos-5-yl)-L-homocysteine + adenine. It catalyses the reaction S-methyl-5'-thioadenosine + H2O = 5-(methylsulfanyl)-D-ribose + adenine. The enzyme catalyses 5'-deoxyadenosine + H2O = 5-deoxy-D-ribose + adenine. It functions in the pathway amino-acid biosynthesis; L-methionine biosynthesis via salvage pathway; S-methyl-5-thio-alpha-D-ribose 1-phosphate from S-methyl-5'-thioadenosine (hydrolase route): step 1/2. Functionally, catalyzes the irreversible cleavage of the glycosidic bond in both 5'-methylthioadenosine (MTA) and S-adenosylhomocysteine (SAH/AdoHcy) to adenine and the corresponding thioribose, 5'-methylthioribose and S-ribosylhomocysteine, respectively. Also cleaves 5'-deoxyadenosine, a toxic by-product of radical S-adenosylmethionine (SAM) enzymes, into 5-deoxyribose and adenine. Thus, is required for in vivo function of the radical SAM enzymes biotin synthase and lipoic acid synthase, that are inhibited by 5'-deoxyadenosine accumulation. The polypeptide is 5'-methylthioadenosine/S-adenosylhomocysteine nucleosidase (Yersinia pestis bv. Antiqua (strain Antiqua)).